Reading from the N-terminus, the 338-residue chain is tRNA pseudouridine synthase D (338 aa).

Asp79 acts as the Nucleophile in catalysis. Positions 154–303 constitute a TRUD domain; the sequence is GVPNYFGEQR…EEAWRANILY (150 aa).

The protein belongs to the pseudouridine synthase TruD family.

It catalyses the reaction uridine(13) in tRNA = pseudouridine(13) in tRNA. In terms of biological role, responsible for synthesis of pseudouridine from uracil-13 in transfer RNAs. This is tRNA pseudouridine synthase D from Legionella pneumophila (strain Corby).